We begin with the raw amino-acid sequence, 478 residues long: PRAME family member 4 (478 aa).

The stretch at 99 to 126 (RWKLQVLDLQDVCENFWMVWSEAMAHGC) is one LRR 1; degenerate repeat. The LRR 2; degenerate repeat unit spans residues 181–205 (HLCCKKLKILGMPFRNIRSILKMVN). The stretch at 206–232 (LDCIQEVEVNCKWVLPILTQFTPYLGH) is one LRR 3; degenerate repeat. Residues 233-268 (MRNLQKLILSHMDVSRYVSPEQKKEIVTQFTTQFLK) form an LRR 4; degenerate repeat. 5 LRR repeats span residues 269–294 (LRCL…LSCL), 295–326 (KTSL…SQLK), 327–347 (TLDL…QILL), 351–378 (AATL…ALSR), and 379–403 (CFEL…LLSH).

This sequence belongs to the PRAME family.

The polypeptide is PRAME family member 4 (Homo sapiens (Human)).